The chain runs to 251 residues: Flap endonuclease Xni (251 aa).

D104 lines the Mg(2+) pocket. The 5'-3' exonuclease domain occupies 160-249; it reads VLPRQLPDYW…IDGNLQQLRL (90 aa). Positions 171, 172, 180, 182, and 185 each coordinate K(+). Residues 184 to 189 form an interaction with DNA region; the sequence is GIGPKS.

It belongs to the Xni family. Requires Mg(2+) as cofactor. It depends on K(+) as a cofactor.

Functionally, has flap endonuclease activity. During DNA replication, flap endonucleases cleave the 5'-overhanging flap structure that is generated by displacement synthesis when DNA polymerase encounters the 5'-end of a downstream Okazaki fragment. The sequence is that of Flap endonuclease Xni from Salmonella heidelberg (strain SL476).